The following is a 433-amino-acid chain: MIWEFTVLLSLVLGTGAVPLEDPEDGGKHWVVIVAGSNGWYNYRHQADACHAYQIVHRNGIPDEQIIVMMYDDIANSEDNPTPGIVINRPNGSDVYQGVLKDYTGEDVTPKNFLAVLRGDAEAVKGVGSGKVLKSGPRDHVFVYFTDHGATGILVFPNEDLHVKDLNETIRYMYEHKMYQKMVFYIEACESGSMMNHLPPDINVYATTAANPRESSYACYYDEQRSTFLGDWYSVNWMEDSDVEDLTKETLHKQYQLVKSHTNTSHVMQYGNKSISAMKLMQFQGLKHQASSPISLPAVSRLDLTPSPEVPLSIMKRKLMSTNDLQESRRLVQKIDRHLEARNIIEKSVRKIVTLVSGSAAEVDRLLSQRAPLTEHACYQTAVSHFRSHCFNWHNPTYEYALRHLYVLVNLCENPYPIDRIKLSMNKVCHGYY.

Residues 1-17 (MIWEFTVLLSLVLGTGA) form the signal peptide. The propeptide occupies 18 to 25 (VPLEDPED). Residue N91 is glycosylated (N-linked (GlcNAc...) asparagine). H148 is an active-site residue. A glycan (N-linked (GlcNAc...) asparagine) is linked at N167. C189 (nucleophile) is an active-site residue. N-linked (GlcNAc...) asparagine glycosylation is found at N263 and N272. A propeptide spanning residues 324 to 433 (DLQESRRLVQ…SMNKVCHGYY (110 aa)) is cleaved from the precursor. 2 disulfide bridges follow: C378-C412 and C390-C429.

It belongs to the peptidase C13 family. As to quaternary structure, homodimer before autocatalytic removal of the propeptide. Monomer after autocatalytic processing. May interact with integrins. Post-translationally, activated by autocatalytic processing at pH 4. In terms of tissue distribution, detected in kidney (at protein level).

The protein resides in the lysosome. The enzyme catalyses Hydrolysis of proteins and small molecule substrates at -Asn-|-Xaa- bonds.. Has a strict specificity for hydrolysis of asparaginyl bonds. Can also cleave aspartyl bonds slowly, especially under acidic conditions. Involved in the processing of proteins for MHC class II antigen presentation in the lysosomal/endosomal system. Also involved in MHC class I antigen presentation in cross-presenting dendritic cells by mediating cleavage and maturation of Perforin-2 (MPEG1), thereby promoting antigen translocation in the cytosol. Required for normal lysosomal protein degradation in renal proximal tubules. Required for normal degradation of internalized EGFR. Plays a role in the regulation of cell proliferation via its role in EGFR degradation. The chain is Legumain (LGMN) from Bos taurus (Bovine).